Here is a 177-residue protein sequence, read N- to C-terminus: Cytoglobin-1 (177 aa).

The region spanning P16–E165 is the Globin domain. Positions 79 and 111 each coordinate heme b.

Belongs to the globin family. Monomeric.

Its subcellular location is the cytoplasm. It is found in the nucleus. The catalysed reaction is Fe(II)-heme b-[protein] + nitric oxide + O2 = Fe(III)-heme b-[protein] + nitrate. It catalyses the reaction Fe(III)-heme b-[protein] + nitric oxide + H2O = Fe(II)-heme b-[protein] + nitrite + 2 H(+). It carries out the reaction 2 superoxide + 2 H(+) = H2O2 + O2. The enzyme catalyses H2O2 + AH2 = A + 2 H2O. In terms of biological role, probable multifunctional globin with a hexacoordinated heme iron required for the catalysis of various reactions depending on redox condition of the cell as well as oxygen availability. Has a nitric oxide dioxygenase (NOD) activity and is most probably involved in cell-mediated and oxygen-dependent nitric oxide consumption. Under normoxic conditions functions as a nitric oxide dioxygenase (NOD) but under hypoxic conditions the globin may switch its function to that of a nitrite (NO2) reductase (NiR), generating nitric oxide. Could also have peroxidase and superoxide dismutase activities, detoxifying reactive oxygen species and protecting cells against oxidative stress. Also binds dioxygen with low affinity and could function as an oxygen sensor but has probably no function as a respiratory oxygen carrier. The protein is Cytoglobin-1 of Oryzias latipes (Japanese rice fish).